A 100-amino-acid polypeptide reads, in one-letter code: Urease subunit gamma (100 aa).

It belongs to the urease gamma subunit family. In terms of assembly, heterotrimer of UreA (gamma), UreB (beta) and UreC (alpha) subunits. Three heterotrimers associate to form the active enzyme.

It is found in the cytoplasm. The enzyme catalyses urea + 2 H2O + H(+) = hydrogencarbonate + 2 NH4(+). It functions in the pathway nitrogen metabolism; urea degradation; CO(2) and NH(3) from urea (urease route): step 1/1. In Nitrosospira multiformis (strain ATCC 25196 / NCIMB 11849 / C 71), this protein is Urease subunit gamma.